Consider the following 288-residue polypeptide: Bifunctional protein FolD (288 aa).

Residues Gly165 to Ser167, Ser190, and Ile231 contribute to the NADP(+) site.

Belongs to the tetrahydrofolate dehydrogenase/cyclohydrolase family. Homodimer.

The enzyme catalyses (6R)-5,10-methylene-5,6,7,8-tetrahydrofolate + NADP(+) = (6R)-5,10-methenyltetrahydrofolate + NADPH. The catalysed reaction is (6R)-5,10-methenyltetrahydrofolate + H2O = (6R)-10-formyltetrahydrofolate + H(+). Its pathway is one-carbon metabolism; tetrahydrofolate interconversion. Catalyzes the oxidation of 5,10-methylenetetrahydrofolate to 5,10-methenyltetrahydrofolate and then the hydrolysis of 5,10-methenyltetrahydrofolate to 10-formyltetrahydrofolate. This Nitrosospira multiformis (strain ATCC 25196 / NCIMB 11849 / C 71) protein is Bifunctional protein FolD.